The following is a 189-amino-acid chain: UPF0200 protein Smar_1234 (189 aa).

10–17 (GMPGAGKS) contacts ATP.

The protein belongs to the UPF0200 family.

This Staphylothermus marinus (strain ATCC 43588 / DSM 3639 / JCM 9404 / F1) protein is UPF0200 protein Smar_1234.